Consider the following 159-residue polypeptide: Transcriptional repressor NrdR (159 aa).

Polar residues predominate over residues 1 to 11; that stretch reads MQCPTCQNTDS. Residues 1-21 are disordered; it reads MQCPTCQNTDSRVLESRSADS. A zinc finger spans residues 3–34; that stretch reads CPTCQNTDSRVLESRSADSGKSVRRRRECLNC. An ATP-cone domain is found at 49–139; that stretch reads VSVLKKDGSR…VYRKFNGVKD (91 aa).

Belongs to the NrdR family. It depends on Zn(2+) as a cofactor.

Functionally, negatively regulates transcription of bacterial ribonucleotide reductase nrd genes and operons by binding to NrdR-boxes. In Prochlorococcus marinus (strain MIT 9301), this protein is Transcriptional repressor NrdR.